The sequence spans 543 residues: Tubby-related protein 1 (543 aa).

The tract at residues 1 to 290 (MPLQEETLRE…RASSPPVEVG (290 aa)) is disordered. 2 stretches are compositionally biased toward basic and acidic residues: residues 46–56 (PETPDSLESKP) and 86–99 (FLRD…DPRE). 2 stretches are compositionally biased toward acidic residues: residues 110–132 (GGEE…EEEE) and 244–255 (KKEEEEEVEEEV). A compositionally biased stretch (basic residues) spans 267-276 (GRAKGKGKKK).

Belongs to the TUB family. Homodimer. May interact with ABCF1, PSIP1, ZEB1 and HMGB2 (Potential). Interacts with F-actin. Interacts with DNM1. Interacts with TUB. Interacts with TYRO3. As to expression, retina specific. Detected in the outer plexiform layer in photoreceptor cells (at protein level).

Its subcellular location is the cytoplasm. It localises to the cell membrane. The protein localises to the secreted. It is found in the synapse. In terms of biological role, required for normal development of photoreceptor synapses. Required for normal photoreceptor function and for long-term survival of photoreceptor cells. Interacts with cytoskeleton proteins and may play a role in protein transport in photoreceptor cells. Binds lipids, especially phosphatidylinositol 3-phosphate, phosphatidylinositol 4-phosphate, phosphatidylinositol 5-phosphate, phosphatidylinositol 3,4-bisphosphate, phosphatidylinositol 4,5-bisphosphate, phosphatidylinositol 3,4,5-bisphosphate, phosphatidylserine and phosphatidic acid (in vitro). Contribute to stimulation of phagocytosis of apoptotic retinal pigment epithelium (RPE) cells and macrophages. The sequence is that of Tubby-related protein 1 (Tulp1) from Mus musculus (Mouse).